The primary structure comprises 457 residues: MAKVAAIVLAAGKGTRMKSELVKVMHPLSGMPMISWPVNVVREAGAAVITLVVGHQSEKVREFFADQGDIVFASQEEQLGTGHAVACCSEALSGFTGAILILCGDVPLITPETLQTFLEYHYRQQAVITVLTTCMDNPYGYGRVIKDAAGHVTEIVEEKDASAEQRQINEINSGIYCVDAGFLFTAVADLKNDNAQKEYYLTDIIKTAVAERRTCCAFPIADPMEVMGVNDRVQLAEAGRIIRVRINKALMVAGTTIIDPETTYIDHGVVVGRDTTIYPNVCISGGTVIGDNCVIESSAVIKGCKVGDCVTIKAGSVMEDSVIGNTVAIGPMAHLRSGTELRDEVKIGNFVETKKIIMGAGSKASHLTYLGDATIGSHVNIGCGTITCNYDGVKKHRTVIEDDVFVGSDVQFVAPVSIGRNSLIAAGTTVTKDVPPDSLAIARAPQVNKEGWKLKNK.

Residues 1–232 (MAKVAAIVLA…PMEVMGVNDR (232 aa)) form a pyrophosphorylase region. UDP-N-acetyl-alpha-D-glucosamine-binding positions include 9 to 12 (LAAG), Lys23, Gln75, and 80 to 81 (GT). Asp105 is a binding site for Mg(2+). 4 residues coordinate UDP-N-acetyl-alpha-D-glucosamine: Gly142, Glu157, Asn172, and Asn230. Asn230 contacts Mg(2+). Positions 233-253 (VQLAEAGRIIRVRINKALMVA) are linker. The interval 254 to 457 (GTTIIDPETT…NKEGWKLKNK (204 aa)) is N-acetyltransferase. The UDP-N-acetyl-alpha-D-glucosamine site is built by Arg336 and Lys354. The active-site Proton acceptor is His366. Residues Tyr369 and Asn380 each contribute to the UDP-N-acetyl-alpha-D-glucosamine site. Acetyl-CoA contacts are provided by residues 389-390 (NY), Ser408, Ala426, and Arg443.

This sequence in the N-terminal section; belongs to the N-acetylglucosamine-1-phosphate uridyltransferase family. In the C-terminal section; belongs to the transferase hexapeptide repeat family. In terms of assembly, homotrimer. Mg(2+) serves as cofactor.

The protein resides in the cytoplasm. It catalyses the reaction alpha-D-glucosamine 1-phosphate + acetyl-CoA = N-acetyl-alpha-D-glucosamine 1-phosphate + CoA + H(+). It carries out the reaction N-acetyl-alpha-D-glucosamine 1-phosphate + UTP + H(+) = UDP-N-acetyl-alpha-D-glucosamine + diphosphate. It participates in nucleotide-sugar biosynthesis; UDP-N-acetyl-alpha-D-glucosamine biosynthesis; N-acetyl-alpha-D-glucosamine 1-phosphate from alpha-D-glucosamine 6-phosphate (route II): step 2/2. The protein operates within nucleotide-sugar biosynthesis; UDP-N-acetyl-alpha-D-glucosamine biosynthesis; UDP-N-acetyl-alpha-D-glucosamine from N-acetyl-alpha-D-glucosamine 1-phosphate: step 1/1. It functions in the pathway bacterial outer membrane biogenesis; LPS lipid A biosynthesis. Its function is as follows. Catalyzes the last two sequential reactions in the de novo biosynthetic pathway for UDP-N-acetylglucosamine (UDP-GlcNAc). The C-terminal domain catalyzes the transfer of acetyl group from acetyl coenzyme A to glucosamine-1-phosphate (GlcN-1-P) to produce N-acetylglucosamine-1-phosphate (GlcNAc-1-P), which is converted into UDP-GlcNAc by the transfer of uridine 5-monophosphate (from uridine 5-triphosphate), a reaction catalyzed by the N-terminal domain. The chain is Bifunctional protein GlmU from Geotalea daltonii (strain DSM 22248 / JCM 15807 / FRC-32) (Geobacter daltonii).